The chain runs to 290 residues: 4-hydroxybenzoate octaprenyltransferase (290 aa).

7 consecutive transmembrane segments (helical) span residues 33-53, 99-119, 141-161, 163-183, 213-233, 237-257, and 268-288; these read LWAL…AVFV, LFVV…TMTI, LPQV…FAAV, ESVP…AVAY, FIIG…GWLN, WGYY…QKLI, and AFMN…MSYW.

This sequence belongs to the UbiA prenyltransferase family. The cofactor is Mg(2+).

Its subcellular location is the cell inner membrane. The enzyme catalyses all-trans-octaprenyl diphosphate + 4-hydroxybenzoate = 4-hydroxy-3-(all-trans-octaprenyl)benzoate + diphosphate. It participates in cofactor biosynthesis; ubiquinone biosynthesis. Its function is as follows. Catalyzes the prenylation of para-hydroxybenzoate (PHB) with an all-trans polyprenyl group. Mediates the second step in the final reaction sequence of ubiquinone-8 (UQ-8) biosynthesis, which is the condensation of the polyisoprenoid side chain with PHB, generating the first membrane-bound Q intermediate 3-octaprenyl-4-hydroxybenzoate. The polypeptide is 4-hydroxybenzoate octaprenyltransferase (Escherichia fergusonii (strain ATCC 35469 / DSM 13698 / CCUG 18766 / IAM 14443 / JCM 21226 / LMG 7866 / NBRC 102419 / NCTC 12128 / CDC 0568-73)).